A 181-amino-acid polypeptide reads, in one-letter code: Adenine phosphoribosyltransferase (181 aa).

The protein belongs to the purine/pyrimidine phosphoribosyltransferase family. In terms of assembly, homodimer.

Its subcellular location is the cytoplasm. The enzyme catalyses AMP + diphosphate = 5-phospho-alpha-D-ribose 1-diphosphate + adenine. Its pathway is purine metabolism; AMP biosynthesis via salvage pathway; AMP from adenine: step 1/1. In terms of biological role, catalyzes a salvage reaction resulting in the formation of AMP, that is energically less costly than de novo synthesis. The polypeptide is Adenine phosphoribosyltransferase (Acidobacterium capsulatum (strain ATCC 51196 / DSM 11244 / BCRC 80197 / JCM 7670 / NBRC 15755 / NCIMB 13165 / 161)).